A 150-amino-acid polypeptide reads, in one-letter code: Leukotriene C4 synthase (150 aa).

The Cytoplasmic portion of the chain corresponds to 1–6 (MKDEVA). Residues 7-27 (LLATVTLVGVLLQAYFSLQVI) traverse the membrane as a helical segment. Over 28 to 48 (SARRAFHVSPPLTSGPPEFER) the chain is Lumenal. Arg-30 contacts glutathione. Arg-31 functions as the Proton donor in the catalytic mechanism. Position 36 is a phosphoserine (Ser-36). The chain crosses the membrane as a helical span at residues 49-69 (VFRAQVNCSEYFPLFLATLWV). Glutathione is bound by residues 51–55 (RAQVN), Gln-53, and 58–59 (EY). Residues 70–73 (AGIF) lie on the Cytoplasmic side of the membrane. Residues 74-94 (FHEGAAALCGLFYLFARLRYF) form a helical membrane-spanning segment. 93–97 (YFQGY) is a glutathione binding site. Over 95–104 (QGYARSAQLR) the chain is Lumenal. Arg-104 serves as the catalytic Proton acceptor. The helical transmembrane segment at 105–124 (LTPLYASARALWLLVAMAAL) threads the bilayer. Topologically, residues 125–150 (GLLVHFLPGTLRTALFRWLQMLLPMA) are cytoplasmic.

The protein belongs to the MAPEG family. In terms of assembly, homotrimer. Interacts with ALOX5AP and ALOX5. In terms of processing, phosphorylation at Ser-36 by RPS6KB1 inhibits the leukotriene-C4 synthase activity. Widely expressed.

Its subcellular location is the nucleus outer membrane. The protein resides in the endoplasmic reticulum membrane. It localises to the nucleus membrane. It catalyses the reaction leukotriene C4 = leukotriene A4 + glutathione. The enzyme catalyses (13S,14S)-epoxy-(4Z,7Z,9E,11E,16Z,19Z)-docosahexaenoate + glutathione = (13R)-S-glutathionyl-(14S)-hydroxy-(4Z,7Z,9E,11E,16Z,19Z)-docosahexaenoate. It participates in lipid metabolism; leukotriene C4 biosynthesis. Its activity is regulated as follows. Inhibited by MK886. Functionally, catalyzes the conjugation of leukotriene A4 with reduced glutathione (GSH) to form leukotriene C4 with high specificity. Can also catalyze the transfer of a glutathionyl group from glutathione (GSH) to 13(S),14(S)-epoxy-docosahexaenoic acid to form maresin conjugate in tissue regeneration 1 (MCTR1), a bioactive lipid mediator that possess potent anti-inflammatory and proresolving actions. The polypeptide is Leukotriene C4 synthase (Ltc4s) (Mus musculus (Mouse)).